The chain runs to 293 residues: MAKPFKIIGLIGKQKDPRIAESLQQVADFLVAKGLTLMIDQETAALFPSHHWEAVTRHELGQRCDLAIVVGGDGTLLHVARSLADSGIPLLGIKLGRLGFLADVLPEALGTDLAAMLAGHYREEERFLLQAELEQESQSYLIGTALNDITTHIREVVRLIEFETYINGRFLNSQRSDGLVVATPTGSTAYALSAGGPILDVNLNAMVLVSICPHALSNRPLVIDADSLVEIVISEYNTTPGQVSCDGQPGIALKVGDKVKIYKRPGRVRLIHPTAHDHYSILRAKLHWGRKLG.

Residue D73 is the Proton acceptor of the active site. NAD(+) contacts are provided by residues 73–74 (DG), H78, 147–148 (ND), R158, R175, D177, 188–193 (TAYALS), and Q248.

It belongs to the NAD kinase family. Requires a divalent metal cation as cofactor.

It localises to the cytoplasm. It carries out the reaction NAD(+) + ATP = ADP + NADP(+) + H(+). Involved in the regulation of the intracellular balance of NAD and NADP, and is a key enzyme in the biosynthesis of NADP. Catalyzes specifically the phosphorylation on 2'-hydroxyl of the adenosine moiety of NAD to yield NADP. In Nitrosococcus oceani (strain ATCC 19707 / BCRC 17464 / JCM 30415 / NCIMB 11848 / C-107), this protein is NAD kinase.